Here is a 377-residue protein sequence, read N- to C-terminus: 3-(aryl)acrylate reductase (377 aa).

Residues 121-130, 154-156, Arg266, Gln277, and 334-338 contribute to the FAD site; these read FALTEPGAGS, FIT, and QIHGG. Catalysis depends on Glu361, which acts as the Proton acceptor. 363–365 serves as a coordination point for FAD; sequence TSE.

Belongs to the acyl-CoA dehydrogenase family. FAD serves as cofactor.

The catalysed reaction is 3-phenylpropanoate + oxidized [electron-transfer flavoprotein] + H(+) = (E)-cinnamate + reduced [electron-transfer flavoprotein]. The enzyme catalyses phloretate + oxidized [electron-transfer flavoprotein] + H(+) = (E)-4-coumarate + reduced [electron-transfer flavoprotein]. It catalyses the reaction indole-3-propanoate + oxidized [electron-transfer flavoprotein] + H(+) = (E)-3-(indol-3-yl)acrylate + reduced [electron-transfer flavoprotein]. It functions in the pathway amino-acid degradation. In terms of biological role, essential for the reductive metabolism of L-phenylalanine, L-tyrosine and L-tryptophan. Catalyzes the reduction of phenylacrylic acid to phenylpropionic acid, 4-hydroxy-phenylacrylic acid to 4-hydroxy-phenylpropionic acid, and indoleacrylic acid to indolepropionic acid. The chain is 3-(aryl)acrylate reductase from Clostridium sporogenes (strain ATCC 15579).